We begin with the raw amino-acid sequence, 260 residues long: Flap endonuclease Xni (260 aa).

D105 serves as a coordination point for Mg(2+). Residues 164–254 form the 5'-3' exonuclease domain; the sequence is SQFLDLLALA…LKDFRVNGPA (91 aa). K(+)-binding residues include L172, A173, P181, I183, and I186. The tract at residues 185–190 is interaction with DNA; it reads GIGPKS.

It belongs to the Xni family. Requires Mg(2+) as cofactor. It depends on K(+) as a cofactor.

Has flap endonuclease activity. During DNA replication, flap endonucleases cleave the 5'-overhanging flap structure that is generated by displacement synthesis when DNA polymerase encounters the 5'-end of a downstream Okazaki fragment. The sequence is that of Flap endonuclease Xni from Shewanella sp. (strain ANA-3).